The following is a 329-amino-acid chain: 4-hydroxythreonine-4-phosphate dehydrogenase (329 aa).

Positions 136 and 137 each coordinate substrate. The a divalent metal cation site is built by H166, H211, and H266. Substrate-binding residues include K274, N283, and R292.

It belongs to the PdxA family. In terms of assembly, homodimer. Zn(2+) is required as a cofactor. The cofactor is Mg(2+). It depends on Co(2+) as a cofactor.

It localises to the cytoplasm. The enzyme catalyses 4-(phosphooxy)-L-threonine + NAD(+) = 3-amino-2-oxopropyl phosphate + CO2 + NADH. The protein operates within cofactor biosynthesis; pyridoxine 5'-phosphate biosynthesis; pyridoxine 5'-phosphate from D-erythrose 4-phosphate: step 4/5. Catalyzes the NAD(P)-dependent oxidation of 4-(phosphooxy)-L-threonine (HTP) into 2-amino-3-oxo-4-(phosphooxy)butyric acid which spontaneously decarboxylates to form 3-amino-2-oxopropyl phosphate (AHAP). This chain is 4-hydroxythreonine-4-phosphate dehydrogenase, found in Escherichia coli (strain SE11).